The chain runs to 197 residues: Recombination protein RecR (197 aa).

The segment at 57-72 adopts a C4-type zinc-finger fold; sequence CSTCFGITESDPCHLC. Residues 79 to 174 enclose the Toprim domain; that stretch reads ASICVVEEPQ…KVTRLAHGIP (96 aa).

Belongs to the RecR family.

Functionally, may play a role in DNA repair. It seems to be involved in an RecBC-independent recombinational process of DNA repair. It may act with RecF and RecO. This chain is Recombination protein RecR, found in Geotalea uraniireducens (strain Rf4) (Geobacter uraniireducens).